The following is a 150-amino-acid chain: Putative biopolymer transport protein ExbB-like 2 (150 aa).

3 helical membrane-spanning segments follow: residues 5–25 (VDYGIIGFLIFLSVIVIAIAI), 63–83 (APYIGLLGTVMGIMLTFMDLG), and 97–117 (LALALKATGMGLLVAIPAIVI).

This sequence belongs to the ExbB/TolQ family.

The protein localises to the cell inner membrane. This Helicobacter pylori (strain ATCC 700392 / 26695) (Campylobacter pylori) protein is Putative biopolymer transport protein ExbB-like 2.